Here is a 1628-residue protein sequence, read N- to C-terminus: Lysine-specific histone demethylase 1 homolog 3 (1628 aa).

The disordered stretch occupies residues 1–71 (MDGKEKKSGS…KKLSALGKDS (71 aa)). Positions 19 to 28 (FDDDADDDEP) are enriched in acidic residues. The span at 43–64 (KDKVETESTGKQRQKQVVEKKL) shows a compositional bias: basic and acidic residues. The SWIRM domain maps to 378-478 (GRAAAVTAGL…AGISSVNGKA (101 aa)). Positions 647, 649, 655, and 1077 each coordinate FAD. Residues 1271 to 1317 (SGKKSLRQANTTNTSRIRRKLNSPDTDSKGKLSNGNDVKTDEEFEDN) are disordered.

This sequence belongs to the flavin monoamine oxidase family. FAD serves as cofactor.

Probable histone demethylase that reduces the levels of histone H3 'Lys-4' methylation in chromatin. This is Lysine-specific histone demethylase 1 homolog 3 (LDL3) from Arabidopsis thaliana (Mouse-ear cress).